The primary structure comprises 903 residues: Pentatricopeptide repeat-containing protein At3g02330, mitochondrial (903 aa).

The N-terminal 31 residues, 1 to 31, are a transit peptide targeting the mitochondrion; the sequence is MAESLRLLHMTRSVVSFNRCLTEKISYRRVP. PPR repeat units follow at residues 47–81, 82–112, 113–143, 144–178, 179–213, 214–244, 245–279, 280–314, 346–380, 381–415, 416–446, 447–481, 482–515, 516–550, 567–601, 602–636, 637–667, 668–702, 703–738, and 739–769; these read STTNFSFVFKECAKQGALELGKQAHAHMIISGFRP, TTFVLNCLLQVYTNSRDFVSASMVFDKMPLR, DVVSWNKMINGYSKSNDMFKANSFFNMMPVR, DVVSWNSMLSGYLQNGESLKSIEVFVDMGREGIEF, DGRTFAIILKVCSFLEDTSLGMQIHGIVVRVGCDT, DVVAASALLDMYAKGKRFVESLRVFQGIPEK, NSVSWSAIIAGCVQNNLLSLALKFFKEMQKVNAGV, SQSIYASVLRSCAALSELRLGGQLHAHALKSDFAA, NRQSYNAMITGYSQEEHGFKALLLFHRLMSSGLGF, DEISLSGVFRACALVKGLSEGLQIYGLAIKSSLSL, DVCVANAAIDMYGKCQALAEAFRVFDEMRRR, DAVSWNAIIAAHEQNGKGYETLFLFVSMLRSRIEP, DEFTFGSILKACTGGSLGYGMEIHSSIVKSGMAS, NSSVGCSLIDMYSKCGMIEEAEKIHSRFFQRANVS, MCVSWNSIISGYVMKEQSEDAQMLFTRMMEMGITP, DKFTYATVLDTCANLASAGLGKQIHAQVIKKELQS, DVYICSTLVDMYSKCGDLHDSRLMFEKSLRR, DFVTWNAMICGYAHHGKGEEAIQLFERMILENIKP, NHVTFISILRACAHMGLIDKGLEYFYMMKRDYGLDP, and QLPHYSNMVDILGKSGKVKRALELIREMPFE. The segment at 774-850 is type E motif; that stretch reads IWRTLLGVCT…EPGCSWVELK (77 aa). The type E(+) motif stretch occupies residues 851–881; the sequence is DELHVFLVGDKAHPRWEEIYEELGLIYSEMK.

The protein belongs to the PPR family. PCMP-E subfamily. As to quaternary structure, interacts with MORF1/RIP8.

The protein resides in the mitochondrion. Its function is as follows. Involved in C-to-U editing of mitochondrial RNA. Required for RNA editing at 8 sites in 6 different mRNAs in mitochondria. This Arabidopsis thaliana (Mouse-ear cress) protein is Pentatricopeptide repeat-containing protein At3g02330, mitochondrial (PCMP-E90).